A 453-amino-acid chain; its full sequence is UDP-glucosyltransferase avaP (453 aa).

The protein belongs to the UDP-glycosyltransferase family.

The protein operates within secondary metabolite biosynthesis. Functionally, UDP-glucosyltransferase; part of the cluster that mediates the biosynthesis of a highly modified cyclo-arginine-tryptophan dipeptide (cRW). The first step of the pathway is perfornmed by the arginine-containing cyclodipeptide synthase (RCPDS) avaA that acts as the scaffold-generating enzyme and is responsible for formation of the cyclo-Arg-Trp (cRW) diketopiperazine. AvaB then acts as a multifunctional flavoenzyme that is responsible for generating the cyclo-Arg-formylkynurenine DKP, which can be deformylated by avaC. AvaB then further catalyzes an additional N-oxidation followed by cyclization and dehydration. The next step is an N-acetylation of the guanidine group catalyzed by the arginine N-acetyltransferase avaD. The roles of the additional enzymes identified within the ava cluster still have to be determined. The chain is UDP-glucosyltransferase avaP from Aspergillus versicolor.